Consider the following 393-residue polypeptide: Formate-dependent phosphoribosylglycinamide formyltransferase (393 aa).

N(1)-(5-phospho-beta-D-ribosyl)glycinamide contacts are provided by residues 22 to 23 and Glu82; that span reads EL. ATP-binding positions include Arg114, Lys155, 160-165, 195-198, and Glu203; these read SSGKGQ and EGLV. In terms of domain architecture, ATP-grasp spans 119-308; the sequence is LLAAETLQLP…EFALHVRAFL (190 aa). Residues Glu267 and Glu279 each contribute to the Mg(2+) site. Residues Asp286, Lys355, and 362 to 363 each bind N(1)-(5-phospho-beta-D-ribosyl)glycinamide; that span reads RR.

The protein belongs to the PurK/PurT family. Homodimer.

It catalyses the reaction N(1)-(5-phospho-beta-D-ribosyl)glycinamide + formate + ATP = N(2)-formyl-N(1)-(5-phospho-beta-D-ribosyl)glycinamide + ADP + phosphate + H(+). It functions in the pathway purine metabolism; IMP biosynthesis via de novo pathway; N(2)-formyl-N(1)-(5-phospho-D-ribosyl)glycinamide from N(1)-(5-phospho-D-ribosyl)glycinamide (formate route): step 1/1. Its function is as follows. Involved in the de novo purine biosynthesis. Catalyzes the transfer of formate to 5-phospho-ribosyl-glycinamide (GAR), producing 5-phospho-ribosyl-N-formylglycinamide (FGAR). Formate is provided by PurU via hydrolysis of 10-formyl-tetrahydrofolate. This Yersinia enterocolitica serotype O:8 / biotype 1B (strain NCTC 13174 / 8081) protein is Formate-dependent phosphoribosylglycinamide formyltransferase.